The primary structure comprises 486 residues: N-succinylglutamate 5-semialdehyde dehydrogenase (486 aa).

220 to 225 (GSSRTG) contributes to the NAD(+) binding site. Residues E243 and C277 contribute to the active site.

It belongs to the aldehyde dehydrogenase family. AstD subfamily.

It carries out the reaction N-succinyl-L-glutamate 5-semialdehyde + NAD(+) + H2O = N-succinyl-L-glutamate + NADH + 2 H(+). Its pathway is amino-acid degradation; L-arginine degradation via AST pathway; L-glutamate and succinate from L-arginine: step 4/5. Its function is as follows. Catalyzes the NAD-dependent reduction of succinylglutamate semialdehyde into succinylglutamate. The sequence is that of N-succinylglutamate 5-semialdehyde dehydrogenase from Shewanella baltica (strain OS223).